Reading from the N-terminus, the 700-residue chain is Eukaryotic peptide chain release factor GTP-binding subunit (700 aa).

Positions 10–136 are several sort of repeats; the sequence is GQGQGYNQYN…YAAPAQSSSQ (127 aa). Low complexity predominate over residues 114–123; the sequence is QGAQGYNAQQ. Positions 114–250 are disordered; that stretch reads QGAQGYNAQQ…TSTGGANSVD (137 aa). Residues 131 to 151 are compositionally biased toward polar residues; the sequence is AQSSSQGMTLKDFQNQQGSTN. The charged stretch occupies residues 137–267; the sequence is GMTLKDFQNQ…DEVDEEVVKD (131 aa). 2 stretches are compositionally biased toward basic and acidic residues: residues 179–194 and 204–221; these read KTEKTDESKEATKTTD and PKIDDLKISEAEKPKTKE. Residues 222-246 are compositionally biased toward polar residues; that stretch reads NTPSADDTSSEKTTSAKADTSTGGA. In terms of domain architecture, tr-type G spans 272–498; it reads KDHVSIIFMG…YLDNMKTTDR (227 aa). Positions 281–288 are G1; that stretch reads GHVDAGKS. 281–288 contributes to the GTP binding site; that stretch reads GHVDAGKS. The interval 337 to 341 is G2; that stretch reads GKTIE. T355 carries the post-translational modification Phosphothreonine. The interval 358 to 361 is G3; sequence DAPG. Residues 358–362 and 420–423 contribute to the GTP site; these read DAPGH and NKMD. The G4 stretch occupies residues 420-423; it reads NKMD. The segment at 462 to 464 is G5; it reads SGY.

This sequence belongs to the TRAFAC class translation factor GTPase superfamily. Classic translation factor GTPase family. ERF3 subfamily.

It is found in the cytoplasm. Involved in translation termination. Stimulates the activity of ERF1. Binds guanine nucleotides. The polypeptide is Eukaryotic peptide chain release factor GTP-binding subunit (SUP35) (Kluyveromyces lactis (strain ATCC 8585 / CBS 2359 / DSM 70799 / NBRC 1267 / NRRL Y-1140 / WM37) (Yeast)).